A 458-amino-acid chain; its full sequence is ATP synthase subunit beta (458 aa).

Residue 148-155 (GGAGVGKT) participates in ATP binding.

This sequence belongs to the ATPase alpha/beta chains family. As to quaternary structure, F-type ATPases have 2 components, CF(1) - the catalytic core - and CF(0) - the membrane proton channel. CF(1) has five subunits: alpha(3), beta(3), gamma(1), delta(1), epsilon(1). CF(0) has three main subunits: a(1), b(2) and c(9-12). The alpha and beta chains form an alternating ring which encloses part of the gamma chain. CF(1) is attached to CF(0) by a central stalk formed by the gamma and epsilon chains, while a peripheral stalk is formed by the delta and b chains.

The protein localises to the cell inner membrane. The enzyme catalyses ATP + H2O + 4 H(+)(in) = ADP + phosphate + 5 H(+)(out). Functionally, produces ATP from ADP in the presence of a proton gradient across the membrane. The catalytic sites are hosted primarily by the beta subunits. This chain is ATP synthase subunit beta, found in Laribacter hongkongensis (strain HLHK9).